A 462-amino-acid chain; its full sequence is Cytochrome P450 20A1 (462 aa).

The chain crosses the membrane as a helical span at residues 4-24 (FAIFAVTFLLALVGAVLYLYP). Cysteine 409 provides a ligand contact to heme.

The protein belongs to the cytochrome P450 family. Requires heme as cofactor.

It localises to the membrane. The protein is Cytochrome P450 20A1 (Cyp20a1) of Mus musculus (Mouse).